A 339-amino-acid chain; its full sequence is tRNA-dihydrouridine(20/20a) synthase (339 aa).

FMN is bound by residues 26-28 and glutamine 78; that span reads PML. Cysteine 108 (proton donor) is an active-site residue. FMN contacts are provided by residues lysine 147, histidine 180, 220–222, and 242–243; these read NGG and GR.

This sequence belongs to the Dus family. DusA subfamily. FMN serves as cofactor.

The catalysed reaction is 5,6-dihydrouridine(20) in tRNA + NADP(+) = uridine(20) in tRNA + NADPH + H(+). The enzyme catalyses 5,6-dihydrouridine(20) in tRNA + NAD(+) = uridine(20) in tRNA + NADH + H(+). It carries out the reaction 5,6-dihydrouridine(20a) in tRNA + NADP(+) = uridine(20a) in tRNA + NADPH + H(+). It catalyses the reaction 5,6-dihydrouridine(20a) in tRNA + NAD(+) = uridine(20a) in tRNA + NADH + H(+). Its function is as follows. Catalyzes the synthesis of 5,6-dihydrouridine (D), a modified base found in the D-loop of most tRNAs, via the reduction of the C5-C6 double bond in target uridines. Specifically modifies U20 and U20a in tRNAs. The polypeptide is tRNA-dihydrouridine(20/20a) synthase (Shigella flexneri).